The primary structure comprises 146 residues: MIF-like protein mif-3 (146 aa).

Belongs to the MIF family.

This is MIF-like protein mif-3 (mif-3) from Caenorhabditis elegans.